We begin with the raw amino-acid sequence, 1550 residues long: Adhesion G protein-coupled receptor L3 (1550 aa).

The signal sequence occupies residues 1-19 (MCPPQLFILMMLLAPVVHG). At 20 to 948 (GKHNERHPAL…VHDLLLDVIT (929 aa)) the chain is on the extracellular side. The interval 34–80 (RHAEHSPGGPLPPRHLLQQPAAERSTAHRGQGPRGTARGVRGPGAPG) is disordered. The region spanning 103–192 (SCESYPIELR…KYLEVQYECV (90 aa)) is the SUEL-type lectin domain. 5 disulfide bridges follow: Cys-104–Cys-134, Cys-113–Cys-191, Cys-146–Cys-178, Cys-159–Cys-165, and Cys-203–Cys-385. Residue Asn-161 is glycosylated (N-linked (GlcNAc...) asparagine). In terms of domain architecture, Olfactomedin-like spans 202-461 (LCPGLLKGVY…VVKYSLDFGP (260 aa)). An interaction with FLRT3 region spans residues 317-347 (YHDTSPYRWGGKSDIDLAVDENGLWVIYATE). Ca(2+) contacts are provided by Asp-332, Asn-380, Ala-381, and Val-435. A disordered region spans residues 518-538 (NLGRSTTPSLPGRRNRSTSTP). Residues Asn-532, Asn-616, Asn-839, Asn-884, and Asn-910 are each glycosylated (N-linked (GlcNAc...) asparagine). Residues 755-934 (DIVRENTDNI…AVLMAHVEVK (180 aa)) form the GAIN-B domain. Cystine bridges form between Cys-885–Cys-916 and Cys-904–Cys-918. Residues 885-934 (CSFWSYSKRTMTGYWSTQGCRLLTTNKTHTTCSCNHLTNFAVLMAHVEVK) are GPS. The interval 922–938 (TNFAVLMAHVEVKHSDA) is stachel. A helical membrane pass occupies residues 949–969 (WVGILLSLVCLLICIFTFCFF). The Cytoplasmic segment spans residues 970-977 (RGLQSDRN). Residues 978–998 (TIHKNLCISLFVAELLFLIGI) traverse the membrane as a helical segment. An N-linked (GlcNAc...) asparagine glycan is attached at Asn-999. The Extracellular segment spans residues 999–1006 (NRTDQPIA). A helical transmembrane segment spans residues 1007–1027 (CAVFAALLHFFFLAAFTWMFL). The Cytoplasmic segment spans residues 1028–1048 (EGVQLYIMLVEVFESEHSRRK). A helical transmembrane segment spans residues 1049 to 1069 (YFYLVGYGMPALIVAVSAAVD). Residues 1070-1087 (YRSYGTDKVCWLRLDTYF) are Extracellular-facing. A helical membrane pass occupies residues 1088 to 1108 (IWSFIGPATLIIMLNVIFLGI). The Cytoplasmic portion of the chain corresponds to 1109 to 1141 (ALYKMFHHTAILKPESGCLDNINYEDNRPFIKS). Residues 1142–1162 (WVIGAIALLCLLGLTWAFGLM) traverse the membrane as a helical segment. The Extracellular segment spans residues 1163–1168 (YINEST). A glycan (N-linked (GlcNAc...) asparagine) is linked at Asn-1165. A helical membrane pass occupies residues 1169–1189 (VIMAYLFTIFNSLQGMFIFIF). The Cytoplasmic portion of the chain corresponds to 1190 to 1550 (HCVLQKKVRK…KGPAHLVTSL (361 aa)). The tract at residues 1213–1236 (KSTESSIGSGKTSGSRTPGRYSTG) is disordered. Position 1253 is a phosphoserine (Ser-1253). 2 disordered regions span residues 1410-1435 (LLPPRVYSTDNHQPHHYSRRRLPQDH) and 1528-1550 (PPNKDGASPEGTSKGPAHLVTSL). Ser-1535 is subject to Phosphoserine. Positions 1545–1550 (HLVTSL) match the PDZ-binding motif.

The protein belongs to the G-protein coupled receptor 2 family. LN-TM7 subfamily. In terms of assembly, heterodimer of 2 chains generated by proteolytic processing; the large extracellular N-terminal fragment and the membrane-bound C-terminal fragment predominantly remain associated and non-covalently linked. Interacts (via olfactomedin-like domain) with FLRT1 (via extracellular domain). Interacts (via olfactomedin-like domain) with FLRT2 (via extracellular domain). Interacts (via olfactomedin-like domain) with FLRT3 (via extracellular domain); the interaction is direct. Interacts (via extracellular domain) with TENM1. Interacts (via extracellular domain) with TENM2. Interacts (via extracellular domain) with TENM3. Identified in a complex with FLRT3 and UNC5B; does not interact with UNC5B by itself. Identified in a complex with FLRT3 and UNC5D; does not interact with UNC5D by itself. As to quaternary structure, interacts (via PDZ-binding motif) with SHANK3. Interacts (via PDZ-binding motif) with DLG4. Post-translationally, autoproteolytically processed at the GPS region of the GAIN-B domain; this cleavage modulates receptor activity. Predominantly expressed in brain, followed by heart, placenta, pancreas, kidney and testis.

The protein resides in the cell membrane. It is found in the postsynaptic cell membrane. It localises to the cell projection. The protein localises to the axon. Its subcellular location is the cell junction. Forms a heterodimer of 2 chains generated by proteolytic processing that remain associated through non-covalent interactions mediated by the GAIN-B domain. In the inactivated receptor, the Stachel sequence (also named stalk) is embedded in the GAIN-B domain, where it adopts a beta-strand conformation. On activation, the Stachel moves into the 7 transmembrane region and adopts a twisted hook-shaped configuration that forms contacts within the receptor, leading to coupling of a G-alpha protein, which activates signaling. The cleaved GAIN-B and N-terminal domains can then dissociate from the rest of the receptor. Functionally, orphan adhesion G-protein coupled receptor (aGPCR), which mediates synapse specificity. Ligand binding causes a conformation change that triggers signaling via guanine nucleotide-binding proteins (G proteins) and modulates the activity of downstream effectors. ADGRL3 is coupled with different classes of G alpha proteins, such as G(12)/G(13), G(s), G(i) or G(q), depending on the context. Coupling to G(12)/G(13) G proteins, which mediates the activation Rho small GTPases is the most efficient. Following G-protein coupled receptor activation, associates with cell adhesion molecules that are expressed at the surface of adjacent cells to direct synapse specificity. Specifically mediates the establishment of Schaffer-collateral synapses formed by CA3-region axons on CA1-region pyramidal neurons in the hippocampus. Localizes to postsynaptic spines in excitatory synapses in the S.oriens and S.radiatum and interacts with presynaptic cell adhesion molecules FLRT3 and TENM2, promoting synapse formation. Plays a role in the development of glutamatergic synapses in the cortex. Important in determining the connectivity rates between the principal neurons in the cortex. In terms of biological role, orphan adhesion G-protein coupled receptor (aGPCR), which mediates synapse specificity. Ligand binding causes a conformation change that triggers signaling via guanine nucleotide-binding proteins (G proteins) and modulates the activity of downstream effectors, such as adenylate cyclase. Isoform 1 is specifically coupled to G(s) G proteins and mediates activation of adenylate cyclase activity. Following G-protein coupled receptor activation, undergoes liquid-liquid phase transition, associates with (1) cell adhesion molecules that are expressed at the surface of adjacent cells, as well as (2) PDZ-containing proteins, such as SHANK3 and DLG4, in the cytoplasm to direct synapse formation. This chain is Adhesion G protein-coupled receptor L3, found in Rattus norvegicus (Rat).